Consider the following 394-residue polypeptide: Ceramide glucosyltransferase (394 aa).

Topologically, residues 1-10 are lumenal; that stretch reads MAVLDLALQG. Residues 11-32 form a helical membrane-spanning segment; it reads LAIFGCVLFFVLWFMHFLSIVY. At 33–195 the chain is on the cytoplasmic side; the sequence is TRLHLNKKVS…QVYFGTSHPR (163 aa). Residue D92 is a short sequence motif, D1. A short sequence motif (D2) is located at residue D144. The helical transmembrane segment at 196-215 threads the bilayer; sequence SYISANVTGFKCVTGMSCLM. The Lumenal segment spans residues 216–287; sequence RKEVLDQAGG…KLRINMLPAT (72 aa). A short sequence motif (D3) is located at residue D236. D236 (proton acceptor) is an active-site residue. The (Q/R)XXRW motif lies at 272-276; sequence RMIRW. A helical membrane pass occupies residues 288–304; sequence IICEPISECFVASLIIG. The Cytoplasmic segment spans residues 305–309; sequence WAAHH. Residues 310–328 form a helical membrane-spanning segment; that stretch reads IFRWDIMVFFMCHCLAWFI. Topologically, residues 329 to 348 are lumenal; the sequence is FDYIQLRGVQGGPLNFSKLD. The helical transmembrane segment at 349 to 369 threads the bilayer; sequence YAVAWFIRESMTIYIFLSALW. The Cytoplasmic segment spans residues 370–394; that stretch reads DPTISWRTGRYRLRCGGTAEEILDV.

Belongs to the glycosyltransferase 2 family.

Its subcellular location is the golgi apparatus membrane. It carries out the reaction an N-acylsphing-4-enine + UDP-alpha-D-glucose = a beta-D-glucosyl-(1&lt;-&gt;1')-N-acylsphing-4-enine + UDP + H(+). It catalyses the reaction UDP-alpha-D-xylose + an N-acylsphing-4-enine = a beta-D-xylosyl-(1&lt;-&gt;1')-N-acylsphing-4-enine + UDP + H(+). The catalysed reaction is N-(9Z-octadecenoyl)-sphing-4-enine + UDP-alpha-D-xylose = beta-D-xylosyl-(1&lt;-&gt;1')-N-(9Z-octadecenoyl)-sphing-4-enine + UDP + H(+). The protein operates within lipid metabolism; sphingolipid metabolism. Functionally, participates in the initial step of the glucosylceramide-based glycosphingolipid/GSL synthetic pathway at the cytosolic surface of the Golgi. Catalyzes the transfer of glucose from UDP-glucose to ceramide to produce glucosylceramide/GlcCer (such as beta-D-glucosyl-(1&lt;-&gt;1')-N-acylsphing-4-enine). Glucosylceramide is the core component of glycosphingolipids/GSLs, amphipathic molecules consisting of a ceramide lipid moiety embedded in the outer leaflet of the membrane, linked to one of hundreds of different externally oriented oligosaccharide structures. Glycosphingolipids are essential components of membrane microdomains that mediate membrane trafficking and signal transduction. They are implicated in many fundamental cellular processes, including growth, differentiation, migration, morphogenesis, cell-to-cell and cell-to-matrix interactions. Catalyzes the synthesis of xylosylceramide/XylCer (such as beta-D-xylosyl-(1&lt;-&gt;1')-N-acylsphing-4-enine) using UDP-Xyl as xylose donor. This is Ceramide glucosyltransferase (ugcg) from Xenopus tropicalis (Western clawed frog).